A 91-amino-acid chain; its full sequence is Uteroglobin (91 aa).

The first 21 residues, 1-21, serve as a signal peptide directing secretion; it reads MKLAITITLAILALCCSPASA.

The protein belongs to the secretoglobin family. Antiparallel homodimer; disulfide-linked. Interaction with LMBR1L is controversial. Club cells (nonciliated cells of the surface epithelium of the pulmonary airways). Expressed in lung, uterus, and prostate.

The protein localises to the secreted. Functionally, binds phosphatidylcholine, phosphatidylinositol, polychlorinated biphenyls (PCB) and weakly progesterone, potent inhibitor of phospholipase A2. The chain is Uteroglobin (SCGB1A1) from Equus caballus (Horse).